The sequence spans 267 residues: Thiazole synthase (267 aa).

Lysine 101 acts as the Schiff-base intermediate with DXP in catalysis. 1-deoxy-D-xylulose 5-phosphate is bound by residues glycine 162, 188–189, and 210–211; these read AG and NT. Positions 247–267 are disordered; sequence HASPSSPAAGVPCLPDPEVPV.

This sequence belongs to the ThiG family. In terms of assembly, homotetramer. Forms heterodimers with either ThiH or ThiS.

It is found in the cytoplasm. The catalysed reaction is [ThiS sulfur-carrier protein]-C-terminal-Gly-aminoethanethioate + 2-iminoacetate + 1-deoxy-D-xylulose 5-phosphate = [ThiS sulfur-carrier protein]-C-terminal Gly-Gly + 2-[(2R,5Z)-2-carboxy-4-methylthiazol-5(2H)-ylidene]ethyl phosphate + 2 H2O + H(+). It participates in cofactor biosynthesis; thiamine diphosphate biosynthesis. Functionally, catalyzes the rearrangement of 1-deoxy-D-xylulose 5-phosphate (DXP) to produce the thiazole phosphate moiety of thiamine. Sulfur is provided by the thiocarboxylate moiety of the carrier protein ThiS. In vitro, sulfur can be provided by H(2)S. This is Thiazole synthase from Deinococcus geothermalis (strain DSM 11300 / CIP 105573 / AG-3a).